The primary structure comprises 213 residues: Nucleoside triphosphate pyrophosphatase (213 aa).

Catalysis depends on Asp77, which acts as the Proton acceptor.

The protein belongs to the Maf family. A divalent metal cation is required as a cofactor.

The protein resides in the cytoplasm. It carries out the reaction a ribonucleoside 5'-triphosphate + H2O = a ribonucleoside 5'-phosphate + diphosphate + H(+). The enzyme catalyses a 2'-deoxyribonucleoside 5'-triphosphate + H2O = a 2'-deoxyribonucleoside 5'-phosphate + diphosphate + H(+). In terms of biological role, nucleoside triphosphate pyrophosphatase. May have a dual role in cell division arrest and in preventing the incorporation of modified nucleotides into cellular nucleic acids. The protein is Nucleoside triphosphate pyrophosphatase of Cutibacterium acnes (strain DSM 16379 / KPA171202) (Propionibacterium acnes).